The following is a 178-amino-acid chain: ATP synthase subunit delta (178 aa).

It belongs to the ATPase delta chain family. As to quaternary structure, F-type ATPases have 2 components, F(1) - the catalytic core - and F(0) - the membrane proton channel. F(1) has five subunits: alpha(3), beta(3), gamma(1), delta(1), epsilon(1). F(0) has three main subunits: a(1), b(2) and c(10-14). The alpha and beta chains form an alternating ring which encloses part of the gamma chain. F(1) is attached to F(0) by a central stalk formed by the gamma and epsilon chains, while a peripheral stalk is formed by the delta and b chains.

Its subcellular location is the cell inner membrane. Its function is as follows. F(1)F(0) ATP synthase produces ATP from ADP in the presence of a proton or sodium gradient. F-type ATPases consist of two structural domains, F(1) containing the extramembraneous catalytic core and F(0) containing the membrane proton channel, linked together by a central stalk and a peripheral stalk. During catalysis, ATP synthesis in the catalytic domain of F(1) is coupled via a rotary mechanism of the central stalk subunits to proton translocation. In terms of biological role, this protein is part of the stalk that links CF(0) to CF(1). It either transmits conformational changes from CF(0) to CF(1) or is implicated in proton conduction. The sequence is that of ATP synthase subunit delta from Dechloromonas aromatica (strain RCB).